A 366-amino-acid chain; its full sequence is Cell division protein FtsZ 1 (366 aa).

Residues 45-49 (GAGCN), 132-134 (GTG), glutamate 163, arginine 167, and aspartate 210 contribute to the GTP site. Acidic residues predominate over residues 344 to 354 (PEEETPLETPE). The disordered stretch occupies residues 344–366 (PEEETPLETPEESPSIEISIPEL). Residues 355–366 (ESPSIEISIPEL) show a composition bias toward low complexity.

This sequence belongs to the FtsZ family. In terms of assembly, homodimer. Polymerizes to form a dynamic ring structure in a strictly GTP-dependent manner. Interacts directly with several other division proteins.

Its subcellular location is the cytoplasm. Essential cell division protein that forms a contractile ring structure (Z ring) at the future cell division site. The regulation of the ring assembly controls the timing and the location of cell division. One of the functions of the FtsZ ring is to recruit other cell division proteins to the septum to produce a new cell wall between the dividing cells. Binds GTP and shows GTPase activity. In Pyrococcus woesei, this protein is Cell division protein FtsZ 1.